A 283-amino-acid chain; its full sequence is ATP phosphoribosyltransferase (283 aa).

It belongs to the ATP phosphoribosyltransferase family. Long subfamily. Mg(2+) is required as a cofactor.

Its subcellular location is the cytoplasm. It catalyses the reaction 1-(5-phospho-beta-D-ribosyl)-ATP + diphosphate = 5-phospho-alpha-D-ribose 1-diphosphate + ATP. It participates in amino-acid biosynthesis; L-histidine biosynthesis; L-histidine from 5-phospho-alpha-D-ribose 1-diphosphate: step 1/9. With respect to regulation, feedback inhibited by histidine. Catalyzes the condensation of ATP and 5-phosphoribose 1-diphosphate to form N'-(5'-phosphoribosyl)-ATP (PR-ATP). Has a crucial role in the pathway because the rate of histidine biosynthesis seems to be controlled primarily by regulation of HisG enzymatic activity. The polypeptide is ATP phosphoribosyltransferase (Bacteroides thetaiotaomicron (strain ATCC 29148 / DSM 2079 / JCM 5827 / CCUG 10774 / NCTC 10582 / VPI-5482 / E50)).